Consider the following 293-residue polypeptide: Acetylglutamate kinase (293 aa).

Substrate contacts are provided by residues 68 to 69 (GG), R90, and N189.

This sequence belongs to the acetylglutamate kinase family. ArgB subfamily.

The protein resides in the cytoplasm. It carries out the reaction N-acetyl-L-glutamate + ATP = N-acetyl-L-glutamyl 5-phosphate + ADP. The protein operates within amino-acid biosynthesis; L-arginine biosynthesis; N(2)-acetyl-L-ornithine from L-glutamate: step 2/4. Its function is as follows. Catalyzes the ATP-dependent phosphorylation of N-acetyl-L-glutamate. The protein is Acetylglutamate kinase of Mycolicibacterium smegmatis (strain ATCC 700084 / mc(2)155) (Mycobacterium smegmatis).